The chain runs to 334 residues: Holliday junction branch migration complex subunit RuvB (334 aa).

The segment at 4–186 (ADRLIAPENP…FGITQRLEYY (183 aa)) is large ATPase domain (RuvB-L). ATP-binding positions include isoleucine 25, arginine 26, glycine 67, lysine 70, threonine 71, threonine 72, 133–135 (EDY), arginine 176, tyrosine 186, and arginine 223. Threonine 71 contributes to the Mg(2+) binding site. The segment at 187 to 257 (KVQDLQNIVQ…VADKALNMLD (71 aa)) is small ATPAse domain (RuvB-S). Residues 260–334 (AQGFDYMDRK…RAYLHFGIEK (75 aa)) are head domain (RuvB-H). 2 residues coordinate DNA: arginine 315 and arginine 320.

The protein belongs to the RuvB family. Homohexamer. Forms an RuvA(8)-RuvB(12)-Holliday junction (HJ) complex. HJ DNA is sandwiched between 2 RuvA tetramers; dsDNA enters through RuvA and exits via RuvB. An RuvB hexamer assembles on each DNA strand where it exits the tetramer. Each RuvB hexamer is contacted by two RuvA subunits (via domain III) on 2 adjacent RuvB subunits; this complex drives branch migration. In the full resolvosome a probable DNA-RuvA(4)-RuvB(12)-RuvC(2) complex forms which resolves the HJ.

It is found in the cytoplasm. It carries out the reaction ATP + H2O = ADP + phosphate + H(+). In terms of biological role, the RuvA-RuvB-RuvC complex processes Holliday junction (HJ) DNA during genetic recombination and DNA repair, while the RuvA-RuvB complex plays an important role in the rescue of blocked DNA replication forks via replication fork reversal (RFR). RuvA specifically binds to HJ cruciform DNA, conferring on it an open structure. The RuvB hexamer acts as an ATP-dependent pump, pulling dsDNA into and through the RuvAB complex. RuvB forms 2 homohexamers on either side of HJ DNA bound by 1 or 2 RuvA tetramers; 4 subunits per hexamer contact DNA at a time. Coordinated motions by a converter formed by DNA-disengaged RuvB subunits stimulates ATP hydrolysis and nucleotide exchange. Immobilization of the converter enables RuvB to convert the ATP-contained energy into a lever motion, pulling 2 nucleotides of DNA out of the RuvA tetramer per ATP hydrolyzed, thus driving DNA branch migration. The RuvB motors rotate together with the DNA substrate, which together with the progressing nucleotide cycle form the mechanistic basis for DNA recombination by continuous HJ branch migration. Branch migration allows RuvC to scan DNA until it finds its consensus sequence, where it cleaves and resolves cruciform DNA. The polypeptide is Holliday junction branch migration complex subunit RuvB (Vibrio parahaemolyticus serotype O3:K6 (strain RIMD 2210633)).